The sequence spans 192 residues: Thymidine kinase (192 aa).

ATP contacts are provided by residues 9-16 (SAMNAGKS) and 87-90 (DECQ). The Proton acceptor role is filled by glutamate 88. Residues cysteine 145, cysteine 147, cysteine 182, and histidine 185 each coordinate Zn(2+).

It belongs to the thymidine kinase family. As to quaternary structure, homotetramer.

Its subcellular location is the cytoplasm. It catalyses the reaction thymidine + ATP = dTMP + ADP + H(+). In Shewanella oneidensis (strain ATCC 700550 / JCM 31522 / CIP 106686 / LMG 19005 / NCIMB 14063 / MR-1), this protein is Thymidine kinase.